The primary structure comprises 158 residues: NADH-quinone oxidoreductase subunit B (158 aa).

Residues cysteine 37, cysteine 38, cysteine 102, and cysteine 132 each coordinate [4Fe-4S] cluster.

Belongs to the complex I 20 kDa subunit family. As to quaternary structure, NDH-1 is composed of 14 different subunits. Subunits NuoB, C, D, E, F, and G constitute the peripheral sector of the complex. Requires [4Fe-4S] cluster as cofactor.

The protein resides in the cell inner membrane. The catalysed reaction is a quinone + NADH + 5 H(+)(in) = a quinol + NAD(+) + 4 H(+)(out). NDH-1 shuttles electrons from NADH, via FMN and iron-sulfur (Fe-S) centers, to quinones in the respiratory chain. Couples the redox reaction to proton translocation (for every two electrons transferred, four hydrogen ions are translocated across the cytoplasmic membrane), and thus conserves the redox energy in a proton gradient. The polypeptide is NADH-quinone oxidoreductase subunit B (Leptothrix cholodnii (strain ATCC 51168 / LMG 8142 / SP-6) (Leptothrix discophora (strain SP-6))).